Consider the following 313-residue polypeptide: Porphobilinogen deaminase (313 aa).

C242 carries the post-translational modification S-(dipyrrolylmethanemethyl)cysteine.

It belongs to the HMBS family. As to quaternary structure, monomer. It depends on dipyrromethane as a cofactor.

It carries out the reaction 4 porphobilinogen + H2O = hydroxymethylbilane + 4 NH4(+). The protein operates within porphyrin-containing compound metabolism; protoporphyrin-IX biosynthesis; coproporphyrinogen-III from 5-aminolevulinate: step 2/4. Functionally, tetrapolymerization of the monopyrrole PBG into the hydroxymethylbilane pre-uroporphyrinogen in several discrete steps. The chain is Porphobilinogen deaminase from Shigella flexneri.